The following is a 586-amino-acid chain: Clathrin heavy chain linker domain-containing protein 1 (586 aa).

Positions 174 to 232 (MNLDALTKYMKHLEDKYAEIKQAMLIKYVPAQRKADLDEEMIVLLKRRDVAENLNKKLQ) form a coiled coil.

In Homo sapiens (Human), this protein is Clathrin heavy chain linker domain-containing protein 1 (CLHC1).